The chain runs to 450 residues: Phosphoglucosamine mutase (450 aa).

Residue Ser104 is the Phosphoserine intermediate of the active site. Mg(2+)-binding residues include Ser104, Asp243, Asp245, and Asp247. Phosphoserine is present on Ser104.

This sequence belongs to the phosphohexose mutase family. Requires Mg(2+) as cofactor. In terms of processing, activated by phosphorylation.

The enzyme catalyses alpha-D-glucosamine 1-phosphate = D-glucosamine 6-phosphate. Its function is as follows. Catalyzes the conversion of glucosamine-6-phosphate to glucosamine-1-phosphate. This chain is Phosphoglucosamine mutase, found in Cutibacterium acnes (strain DSM 16379 / KPA171202) (Propionibacterium acnes).